We begin with the raw amino-acid sequence, 733 residues long: Protein ROG3 (733 aa).

The PY-motif signature appears at 460–463 (PPNY). Residues 518-566 (RDNLGLPPSASSAAASRSLSPLLNVPAPEDGTERILPQSALGPNSGSVP) form a disordered region. The segment covering 523 to 540 (LPPSASSAAASRSLSPLL) has biased composition (low complexity). Residues 625-628 (PPSY) carry the PY-motif motif. 2 disordered regions span residues 636-658 (QPRK…SIPT) and 693-733 (ELTS…GNKR). Low complexity predominate over residues 646-658 (RNSSTTLSSSIPT).

This sequence belongs to the arrestin family. Interacts with RSP5 via its 2 PY-motifs.

Functionally, involved in resistance to GST substrate o-dinitrobenzene (o-DNB). This is Protein ROG3 (ROG3) from Saccharomyces cerevisiae (strain ATCC 204508 / S288c) (Baker's yeast).